The sequence spans 144 residues: Large ribosomal subunit protein uL15 (144 aa).

The disordered stretch occupies residues 1 to 48 (MQLNNLKPAAGSKHAKRRVGRGIGSGLGKTAGRGHKGQKSRSGGFHKV). Residues 21–31 (RGIGSGLGKTA) are compositionally biased toward gly residues.

Belongs to the universal ribosomal protein uL15 family. As to quaternary structure, part of the 50S ribosomal subunit.

Binds to the 23S rRNA. The chain is Large ribosomal subunit protein uL15 from Cupriavidus taiwanensis (strain DSM 17343 / BCRC 17206 / CCUG 44338 / CIP 107171 / LMG 19424 / R1) (Ralstonia taiwanensis (strain LMG 19424)).